The following is a 259-amino-acid chain: Flagellar L-ring protein (259 aa).

The first 15 residues, 1-15, serve as a signal peptide directing secretion; the sequence is MKRISLIALVTIMSG. C16 is lipidated: N-palmitoyl cysteine. C16 carries S-diacylglycerol cysteine lipidation.

It belongs to the FlgH family. In terms of assembly, the basal body constitutes a major portion of the flagellar organelle and consists of four rings (L,P,S, and M) mounted on a central rod.

It localises to the cell outer membrane. Its subcellular location is the bacterial flagellum basal body. Its function is as follows. Assembles around the rod to form the L-ring and probably protects the motor/basal body from shearing forces during rotation. The sequence is that of Flagellar L-ring protein from Vibrio vulnificus (strain CMCP6).